The chain runs to 487 residues: Probable cobyric acid synthase (487 aa).

The GATase cobBQ-type domain occupies 249-435; the sequence is DVDIAVVRFP…LHGIFNNASF (187 aa). Cys-328 acts as the Nucleophile in catalysis. Residue His-427 is part of the active site.

The protein belongs to the CobB/CobQ family. CobQ subfamily.

Its pathway is cofactor biosynthesis; adenosylcobalamin biosynthesis. Functionally, catalyzes amidations at positions B, D, E, and G on adenosylcobyrinic A,C-diamide. NH(2) groups are provided by glutamine, and one molecule of ATP is hydrogenolyzed for each amidation. The protein is Probable cobyric acid synthase of Methanocella arvoryzae (strain DSM 22066 / NBRC 105507 / MRE50).